We begin with the raw amino-acid sequence, 298 residues long: Diphthine methyl ester synthase (298 aa).

Residues Leu9, Asp85, Gly88, 113-114, Leu164, Leu222, and His247 contribute to the S-adenosyl-L-methionine site; that span reads SV.

It belongs to the diphthine synthase family.

It is found in the cytoplasm. It catalyses the reaction 2-[(3S)-amino-3-carboxypropyl]-L-histidyl-[translation elongation factor 2] + 4 S-adenosyl-L-methionine = diphthine methyl ester-[translation elongation factor 2] + 4 S-adenosyl-L-homocysteine + 3 H(+). It participates in protein modification; peptidyl-diphthamide biosynthesis. Functionally, S-adenosyl-L-methionine-dependent methyltransferase that catalyzes four methylations of the modified target histidine residue in translation elongation factor 2 (EF-2), to form an intermediate called diphthine methyl ester. The four successive methylation reactions represent the second step of diphthamide biosynthesis. The polypeptide is Diphthine methyl ester synthase (DPH5) (Candida glabrata (strain ATCC 2001 / BCRC 20586 / JCM 3761 / NBRC 0622 / NRRL Y-65 / CBS 138) (Yeast)).